We begin with the raw amino-acid sequence, 334 residues long: N-chimaerin (334 aa).

Residues 1–10 show a composition bias toward polar residues; sequence MPSKESWSGR. Positions 1 to 22 are disordered; sequence MPSKESWSGRKTNRATVHKSKQ. The residue at position 67 (Thr67) is a Phosphothreonine. Residues 80 to 130 form a Phorbol-ester/DAG-type zinc finger; the sequence is VHNFKVHTFRGPHWCEYCANFMWGLIAQGVKCADCGLNVHKQCSKMVPNDC. The region spanning 143–334 is the Rho-GAP domain; sequence CDLTTLVKAH…LLIKNEDILF (192 aa). Thr215 is subject to Phosphothreonine.

As to quaternary structure, interacts with EPHA4; effector of EPHA4 in axon guidance linking EPHA4 activation to RAC1 regulation. Post-translationally, phosphorylated. Phosphorylation is EPHA4 kinase activity-dependent. In neurons in brain regions that are involved in learning and memory processes.

Functionally, GTPase-activating protein for p21-rac and a phorbol ester receptor. Involved in the assembly of neuronal locomotor circuits as a direct effector of EPHA4 in axon guidance. In Rattus norvegicus (Rat), this protein is N-chimaerin (Chn1).